We begin with the raw amino-acid sequence, 164 residues long: SsrA-binding protein (164 aa).

This sequence belongs to the SmpB family.

It is found in the cytoplasm. Its function is as follows. Required for rescue of stalled ribosomes mediated by trans-translation. Binds to transfer-messenger RNA (tmRNA), required for stable association of tmRNA with ribosomes. tmRNA and SmpB together mimic tRNA shape, replacing the anticodon stem-loop with SmpB. tmRNA is encoded by the ssrA gene; the 2 termini fold to resemble tRNA(Ala) and it encodes a 'tag peptide', a short internal open reading frame. During trans-translation Ala-aminoacylated tmRNA acts like a tRNA, entering the A-site of stalled ribosomes, displacing the stalled mRNA. The ribosome then switches to translate the ORF on the tmRNA; the nascent peptide is terminated with the 'tag peptide' encoded by the tmRNA and targeted for degradation. The ribosome is freed to recommence translation, which seems to be the essential function of trans-translation. This is SsrA-binding protein from Corynebacterium glutamicum (strain R).